We begin with the raw amino-acid sequence, 230 residues long: Small ribosomal subunit protein uS3 (230 aa).

In terms of domain architecture, KH type-2 spans 39–107; the sequence is IRKFLTEKLK…PAQINISEVR (69 aa).

The protein belongs to the universal ribosomal protein uS3 family. As to quaternary structure, part of the 30S ribosomal subunit. Forms a tight complex with proteins S10 and S14.

Its function is as follows. Binds the lower part of the 30S subunit head. Binds mRNA in the 70S ribosome, positioning it for translation. This Psychromonas ingrahamii (strain DSM 17664 / CCUG 51855 / 37) protein is Small ribosomal subunit protein uS3.